A 137-amino-acid chain; its full sequence is Nucleoside diphosphate kinase (137 aa).

6 residues coordinate ATP: Lys11, Phe59, Arg87, Thr93, Arg104, and Asn114. His117 (pros-phosphohistidine intermediate) is an active-site residue.

The protein belongs to the NDK family. As to quaternary structure, homotetramer. Requires Mg(2+) as cofactor.

The protein localises to the cytoplasm. It catalyses the reaction a 2'-deoxyribonucleoside 5'-diphosphate + ATP = a 2'-deoxyribonucleoside 5'-triphosphate + ADP. It carries out the reaction a ribonucleoside 5'-diphosphate + ATP = a ribonucleoside 5'-triphosphate + ADP. Its function is as follows. Major role in the synthesis of nucleoside triphosphates other than ATP. The ATP gamma phosphate is transferred to the NDP beta phosphate via a ping-pong mechanism, using a phosphorylated active-site intermediate. The sequence is that of Nucleoside diphosphate kinase from Parafrankia sp. (strain EAN1pec).